The sequence spans 460 residues: uncharacterized protein (460 aa).

This is an uncharacterized protein from Haemophilus influenzae (strain ATCC 51907 / DSM 11121 / KW20 / Rd).